A 433-amino-acid polypeptide reads, in one-letter code: Putative tartrate transporter (433 aa).

Transmembrane regions (helical) follow at residues 17-37 (IVPF…NIGF), 47-67 (GFSS…YFLF), 82-102 (IWIA…AFVQ), 113-133 (LLGV…SFWF), 139-159 (AAVT…GSPI), 177-197 (WMFL…LFYL), 242-262 (VIAL…LGIW), 275-295 (LQVG…MVLW), 314-334 (LLAA…TVLI), 350-370 (LWSM…IATI), and 395-415 (FAGG…VTLV).

The protein belongs to the major facilitator superfamily. Phthalate permease family.

It localises to the cell membrane. Functionally, component of the tartrate utilization system and may allow entry of tartrate and tartrate dehydrogenase. The chain is Putative tartrate transporter (ttuB) from Agrobacterium vitis (Rhizobium vitis).